Reading from the N-terminus, the 427-residue chain is 3-phosphoshikimate 1-carboxyvinyltransferase (427 aa).

3 residues coordinate 3-phosphoshikimate: K20, S21, and R25. K20 is a phosphoenolpyruvate binding site. Positions 92 and 120 each coordinate phosphoenolpyruvate. The 3-phosphoshikimate site is built by S166, Q168, D312, and K339. A phosphoenolpyruvate-binding site is contributed by Q168. The active-site Proton acceptor is the D312. The phosphoenolpyruvate site is built by R343 and R385.

Belongs to the EPSP synthase family. Monomer.

The protein localises to the cytoplasm. It catalyses the reaction 3-phosphoshikimate + phosphoenolpyruvate = 5-O-(1-carboxyvinyl)-3-phosphoshikimate + phosphate. It functions in the pathway metabolic intermediate biosynthesis; chorismate biosynthesis; chorismate from D-erythrose 4-phosphate and phosphoenolpyruvate: step 6/7. Its function is as follows. Catalyzes the transfer of the enolpyruvyl moiety of phosphoenolpyruvate (PEP) to the 5-hydroxyl of shikimate-3-phosphate (S3P) to produce enolpyruvyl shikimate-3-phosphate and inorganic phosphate. This is 3-phosphoshikimate 1-carboxyvinyltransferase from Streptococcus thermophilus (strain ATCC BAA-250 / LMG 18311).